The primary structure comprises 785 residues: Uncoating factor OPG117 (785 aa).

The active site involves D170. Residues 342-469 (TERGDHIVWI…ELMNIINDIQ (128 aa)) are primase. The region spanning 477–639 (KNRELYEKTL…FSQPSGREAA (163 aa)) is the SF3 helicase domain. An ATP-binding site is contributed by 503–510 (GETATGKS).

This sequence belongs to the orthopoxvirus OPG117 family. As to quaternary structure, homomultimer; hexamer. Interacts with OPG148.

Its subcellular location is the host cytoplasm. In terms of biological role, multifunctional protein required for genome uncoating and replication. Major viral uncoating protein that is required for the release of the viral genome from incoming viral cores containing the viral DNA genome. Possesses an ATPase activity that is required for hexamerization and uncoating. This is Uncoating factor OPG117 (OPG117) from Bos taurus (Bovine).